A 428-amino-acid polypeptide reads, in one-letter code: GTPase Obg (428 aa).

One can recognise an Obg domain in the interval 1 to 158; it reads MFVDQVKIYV…RDVILELKVL (158 aa). The 171-residue stretch at 159–329 folds into the OBG-type G domain; it reads ADVGLVGFPS…LLFEVANLIE (171 aa). Residues 165-172, 190-194, 212-215, 282-285, and 310-312 contribute to the GTP site; these read GFPSVGKS, FTTIV, DLPG, NKMD, and SAV. 2 residues coordinate Mg(2+): Ser172 and Thr192. Positions 350–428 constitute an OCT domain; that stretch reads KFETEGVKFD…ILEYEFEFID (79 aa).

The protein belongs to the TRAFAC class OBG-HflX-like GTPase superfamily. OBG GTPase family. As to quaternary structure, monomer. It depends on Mg(2+) as a cofactor.

The protein localises to the cytoplasm. Functionally, an essential GTPase which binds GTP, GDP and possibly (p)ppGpp with moderate affinity, with high nucleotide exchange rates and a fairly low GTP hydrolysis rate. Plays a role in control of the cell cycle, stress response, ribosome biogenesis and in those bacteria that undergo differentiation, in morphogenesis control. The sequence is that of GTPase Obg from Bacillus thuringiensis (strain Al Hakam).